The following is a 482-amino-acid chain: Coagulation factor X (482 aa).

Residues 1-20 (MESPVRLSLLYVVLASLLLP) form the signal peptide. The propeptide occupies 21–40 (GRSVFINRERANNVLQRIRR). Residues 41–85 (ANSFFEEIKKGNLERECVEEICSFEEAREVFEDNEKTTEFWNKYE) form the Gla domain. Residues Glu-46, Glu-47, Glu-54, Glu-56, Glu-59, Glu-60, Glu-65, Glu-66, Glu-69, Glu-72, Glu-75, and Glu-79 each carry the 4-carboxyglutamate modification. A disulfide bond links Cys-57 and Cys-62. Residues 86–122 (DGDQCESSPCQNQGECRDGLGSYTCTCTEGFEGKNCE) form the EGF-like 1; calcium-binding domain. 11 disulfide bridges follow: Cys-90–Cys-101, Cys-95–Cys-110, Cys-112–Cys-121, Cys-129–Cys-140, Cys-136–Cys-149, Cys-151–Cys-164, Cys-172–Cys-340, Cys-238–Cys-243, Cys-259–Cys-275, Cys-388–Cys-402, and Cys-413–Cys-441. A (3R)-3-hydroxyaspartate modification is found at Asp-103. Residues 125–165 (VRKLCSLDNGDCDQFCREEQNSVVCSCAKGYFLGNDGKSCL) enclose the EGF-like 2 domain. Residues 184–231 (VALNTSNSEPDPEDLMPDADILYPTESPSELLNLNKTEPEANSDDVIR) constitute a propeptide, activation peptide. 2 N-linked (GlcNAc...) asparagine glycosylation sites follow: Asn-187 and Asn-218. The 234-residue stretch at 232 to 465 (IVGGQECKRG…FLKWIDRSMK (234 aa)) folds into the Peptidase S1 domain. Catalysis depends on charge relay system residues His-274 and Asp-320. Ser-417 acts as the Charge relay system in catalysis.

It belongs to the peptidase S1 family. In terms of assembly, the two chains are formed from a single-chain precursor by the excision of two Arg residues and are held together by 1 or more disulfide bonds. Forms a heterodimer with SERPINA5. Interacts with ixolaris, an anticoagulant protein from Ixodes scapularis saliva. Post-translationally, the vitamin K-dependent, enzymatic carboxylation of some glutamate residues allows the modified protein to bind calcium. In terms of processing, N- and O-glycosylated. Proteolytically cleaved and activated by cathepsin CTSG. The activation peptide is cleaved by factor IXa (in the intrinsic pathway), or by factor VIIa (in the extrinsic pathway). Post-translationally, the iron and 2-oxoglutarate dependent 3-hydroxylation of aspartate and asparagine is (R) stereospecific within EGF domains. Plasma; synthesized in the liver.

The protein resides in the secreted. The enzyme catalyses Selective cleavage of Arg-|-Thr and then Arg-|-Ile bonds in prothrombin to form thrombin.. With respect to regulation, inhibited by SERPINA5. Its function is as follows. Factor Xa is a vitamin K-dependent glycoprotein that converts prothrombin to thrombin in the presence of factor Va, calcium and phospholipid during blood clotting. Factor Xa activates pro-inflammatory signaling pathways in a protease-activated receptor (PAR)-dependent manner. This is Coagulation factor X (F10) from Rattus norvegicus (Rat).